Consider the following 173-residue polypeptide: Secreted RxLR effector protein RXLR-C12 (173 aa).

A signal peptide spans 1-18; it reads MLQFATAFLAISANVVMT. Positions 41–55 match the RxLR-dEER motif; sequence RRLRTHEIGTVPEER. A glycan (N-linked (GlcNAc...) asparagine) is linked at Asn155.

It belongs to the RxLR effector family.

The protein resides in the secreted. The protein localises to the host cytoplasm. It localises to the host nucleus. In terms of biological role, secreted effector that suppresses pattern-triggered immunity (PTI) in plant host. The polypeptide is Secreted RxLR effector protein RXLR-C12 (Plasmopara halstedii (Downy mildew of sunflower)).